A 337-amino-acid polypeptide reads, in one-letter code: Fructose-1,6-bisphosphatase class 1 (337 aa).

4 residues coordinate Mg(2+): Glu90, Asp112, Leu114, and Asp115. Substrate-binding positions include 115–118 (DGSS), Asn211, and Lys277. Glu283 is a binding site for Mg(2+).

The protein belongs to the FBPase class 1 family. Homotetramer. Mg(2+) serves as cofactor.

It localises to the cytoplasm. It catalyses the reaction beta-D-fructose 1,6-bisphosphate + H2O = beta-D-fructose 6-phosphate + phosphate. The protein operates within carbohydrate biosynthesis; gluconeogenesis. The protein is Fructose-1,6-bisphosphatase class 1 of Azotobacter vinelandii (strain DJ / ATCC BAA-1303).